Here is a 189-residue protein sequence, read N- to C-terminus: Thermostable direct hemolysin 1 (189 aa).

Residues 1 to 24 form the signal peptide; sequence MKHQYFAKKSFLFISMLAAFKTSA. Cys175 and Cys185 are oxidised to a cystine.

Belongs to the TDH hemolysin family. Homodimer.

Bacterial hemolysins are exotoxins that attack blood cell membranes and cause cell rupture by mechanisms not clearly defined. This is Thermostable direct hemolysin 1 (tdh1) from Vibrio parahaemolyticus serotype O3:K6 (strain RIMD 2210633).